The chain runs to 74 residues: Large ribosomal subunit protein uL30 (74 aa).

This sequence belongs to the universal ribosomal protein uL30 family. Part of the 50S ribosomal subunit.

This Koribacter versatilis (strain Ellin345) protein is Large ribosomal subunit protein uL30.